The chain runs to 210 residues: MDNLSPEEVQLRAHQVTDESLESTRRILGLAIESQDAGIKTITMLDEQGEQLNRIEEGMDQINKDMREAEKTLTELNKCCGLCICPCNRTKNFESGKNYKATWGDGGDNSPSNVVSKQPSRITNGQPQQTTGAASGGYIKRITNDAREDEMEENLTQVGSILGNLKNMALDMGNEIDAQNQQIQKITEKADTNKNRIDIANTRAKKLIDS.

M1 is subject to N-acetylmethionine. 4 positions are modified to phosphoserine: S5, S20, S23, and S34. A t-SNARE coiled-coil homology 1 domain is found at 14-76; the sequence is HQVTDESLES…REAEKTLTEL (63 aa). The stretch at 23–76 forms a coiled coil; it reads STRRILGLAIESQDAGIKTITMLDEQGEQLNRIEEGMDQINKDMREAEKTLTEL. Residues C79, C80, C83, C85, and C87 are each lipidated (S-palmitoyl cysteine). The disordered stretch occupies residues 104–135; sequence GDGGDNSPSNVVSKQPSRITNGQPQQTTGAAS. Residues 109 to 133 are compositionally biased toward polar residues; the sequence is NSPSNVVSKQPSRITNGQPQQTTGA. A phosphoserine mark is found at S110 and S160. Positions 145 to 207 constitute a t-SNARE coiled-coil homology 2 domain; it reads DAREDEMEEN…DIANTRAKKL (63 aa).

It belongs to the SNAP-25 family. In terms of assembly, homotetramer (via coiled-coil domain), also forms heterotetramers with STX4 and VAMP3. Found in a complex with VAMP8 and STX1A. Found in a complex with VAMP8 and STX4 in pancreas. Interacts simultaneously with SNAPIN and SYN4. Interacts with STX1A. Interacts with STX12. Interacts tightly to multiple syntaxins and synaptobrevins/VAMPs. Interacts with ZDHHC13 (via ANK repeats). Interacts with ZDHHC17 (via ANK repeats). (Microbial infection) Targeted and hydrolyzed by C.botulinum neurotoxin type A (BoNT/A, botA) which hydrolyzes the 202-Thr-|-Arg-203 bond; the in vitro reaction is not highly efficient. Post-translationally, (Microbial infection) Targeted and hydrolyzed by C.botulinum neurotoxin type E (BoNT/E) which hydrolyzes the 185-Arg-|-Ile-186 bond; the in vitro reaction is more efficient than that of BoNT/A. As to expression, expressed in non-neuronal tissues.

Its subcellular location is the cell membrane. It localises to the synapse. The protein resides in the synaptosome. Its function is as follows. Essential component of the high affinity receptor for the general membrane fusion machinery and an important regulator of transport vesicle docking and fusion. The protein is Synaptosomal-associated protein 23 (Snap23) of Mus musculus (Mouse).